A 462-amino-acid chain; its full sequence is Anthranilate synthase component 1 (462 aa).

L-tryptophan contacts are provided by residues S46 and 243–245; that span reads PHM. Chorismate is bound at residue 278–279; it reads GT. E305 is a Mg(2+) binding site. Residues Y394, R414, 428–430, and G430 contribute to the chorismate site; that span reads SGG. Position 444 (E444) interacts with Mg(2+).

Belongs to the anthranilate synthase component I family. As to quaternary structure, heterotetramer consisting of two non-identical subunits: a beta subunit (TrpG) and a large alpha subunit (TrpE). Mg(2+) serves as cofactor.

It carries out the reaction chorismate + L-glutamine = anthranilate + pyruvate + L-glutamate + H(+). It participates in amino-acid biosynthesis; L-tryptophan biosynthesis; L-tryptophan from chorismate: step 1/5. Feedback inhibited by tryptophan. Functionally, part of a heterotetrameric complex that catalyzes the two-step biosynthesis of anthranilate, an intermediate in the biosynthesis of L-tryptophan. In the first step, the glutamine-binding beta subunit (TrpG) of anthranilate synthase (AS) provides the glutamine amidotransferase activity which generates ammonia as a substrate that, along with chorismate, is used in the second step, catalyzed by the large alpha subunit of AS (TrpE) to produce anthranilate. In the absence of TrpG, TrpE can synthesize anthranilate directly from chorismate and high concentrations of ammonia. In Leptospira biflexa, this protein is Anthranilate synthase component 1 (trpE).